The following is a 466-amino-acid chain: Rho GTPase-activating protein 1 (466 aa).

Disordered stretches follow at residues 1–31 (MTEV…SLSY) and 65–84 (EEQD…DDGG). A compositionally biased stretch (low complexity) spans 8-31 (PSSPSASHSSSSSSSSPSPSSLSY). Basic and acidic residues predominate over residues 65-74 (EEQDLRRRSS). Residues 117–130 (IGWPTNVRHVAHVT) form the CRIB domain. The region spanning 162–342 (VSTESMQLSY…TLIEKTLRER (181 aa)) is the Rho-GAP domain. The tract at residues 354–402 (PLEPSDESGHQSPSQSLAFNTSEQSEETQSDNIENAENQSSSSEISDEL) is disordered. Composition is skewed to polar residues over residues 363–376 (HQSP…NTSE) and 383–397 (SDNI…SSSE).

Functionally, acts as a GTPase activator for the Rac-type GTPase by converting it to an inactive GDP-bound state. The chain is Rho GTPase-activating protein 1 (ROPGAP1) from Arabidopsis thaliana (Mouse-ear cress).